We begin with the raw amino-acid sequence, 1020 residues long: MATLSQPQSALPKTKIATTFGLSKDLKSPISVKVCYLECTRNNVSLVPLSTKFEDPTVFKKLSQIYKNSDLFVEIRVYDGKNNNLISTPVRTSYKAFNNKGRTWNQQLKLNIDYNQISIDAYLKFSICEIIDTKPSVFGVSYLSLFSHDSSTLRSGSHKIPVFMEDDPQYSKNIQYGTLIGLTDLEKRLIDYENGKYPRLNWLDKMVLPKVDATFLKTNNKDHDYYLYIELPQFEFPIVYSDIIYQIPTIEPITETTSKIPPDDTLNSNIIINSIDIPMATSHDPSIMKVYDPDFHITANNHLNPNATTFDPVELKYRKLERNIDNNTILDKELKPTPQLRDELLRIMIKPSNAESTDNEKNLIWKFRYYFSKNNSGNDPSNKSVKSFLPKFLRSINWENDYELDHTFKEIIPFYWNVDKLQIGDALELLGDYFNPYTLGKPTYQDDSMTSKSSKMKSDEKRFIKIYNNVCFLRKLAVERLKLANSEELLLYLLQLVQALKYEALIYEKSPPFCERSDQIEDNASSTLKSPLADFLIERAVENEKLGNFFYWYVKVENEDQLNNPHIDGPIKIYMDILNRYIELLKAHCHENRLPYYKHLKHQIWFIKKLTSLVELLRASFKKNEATAKKVEYLREYLANSGNELLKFPEPFPLPLDPSVMICGCYPEESSVFKSSLAPLKITLKTIEKKKHGHATSQLFGKRSRYGKYPLMFKIGDDLRQDQLVIQIIDLMDQLLKNENLDLKLTPYKILATSPISGLIQFVPNETLDSILSKTYPTSVTYSGGGETSDGPPSVSNNGILNYLRLHSQEQQSEEPISKSILSTNTSQSNTEIPVLPRQPKPTITSDLGVSPILMDNYVKSCAGYCVITYILGVGDRHLDNLLLSPNGKFWHADFGYILGRDPKPFPPLMKLPIQVIDGMGGLHHENYNVFKSYCFITYTTLRKNSNLILNLFQLMLDANIPDIQFDPSRVIEKVQEKFCLQMTEEEAILHFQNLINDSVNAFLPVVIDRLHSLAQYWRA.

Residues 49–210 (LSTKFEDPTV…NWLDKMVLPK (162 aa)) enclose the C2 PI3K-type domain. The PIK helical domain maps to 331-577 (DKELKPTPQL…DGPIKIYMDI (247 aa)). Positions 666-1004 (YPEESSVFKS…LINDSVNAFL (339 aa)) constitute a PI3K/PI4K catalytic domain. Residues 672-678 (VFKSSLA) are G-loop. A catalytic loop region spans residues 873–881 (GVGDRHLDN). The segment at 892-913 (HADFGYILGRDPKPFPPLMKLP) is activation loop.

This sequence belongs to the PI3/PI4-kinase family. In terms of assembly, component of the autophagy-specific VPS34 PI3-kinase complex I composed of at least VPS15, VPS30, VPS34, and of the VPS34 PI3-kinase complex II composed of VPS15, VPS30, VPS34 and VPS38. Interacts with VMNA7. Autophosphorylated.

The protein resides in the golgi apparatus. It is found in the trans-Golgi network membrane. It localises to the endosome membrane. The enzyme catalyses a 1,2-diacyl-sn-glycero-3-phospho-(1D-myo-inositol) + ATP = a 1,2-diacyl-sn-glycero-3-phospho-(1D-myo-inositol-3-phosphate) + ADP + H(+). Multifunctional phosphatidylinositol 3-kinase involved in acidification of vacuoles, pH-dependent cell growth, and autophagocytosis. Plays an important role in protein transport and virulence. Component of the autophagy-specific VPS34 PI3-kinase complex I essential to recruit the ATG8-phosphatidylinositol conjugate and the ATG12-ATG5 conjugate to the pre-autophagosomal structure. Also involved in endosome-to-Golgi retrograde transport as part of the VPS34 PI3-kinase complex II. This second complex is required for the endosome-to-Golgi retrieval of PEP1 and KEX2, and the recruitment of VPS5 and VPS7, two components of the retromer complex, to endosomal membranes (probably through the synthesis of a specific pool of phosphatidylinositol 3-phosphate recruiting the retromer to the endosomes). Finally, it might also be involved in ethanol tolerance and cell wall integrity. In Candida albicans (Yeast), this protein is Phosphatidylinositol 3-kinase VPS34.